The following is a 632-amino-acid chain: Chaperone protein HtpG (632 aa).

The interval 1–339 is a; substrate-binding; sequence MAHETMSFQA…SADLPLNVSR (339 aa). The segment at 340–559 is b; that stretch reads EILQESRDVK…DNDMSGYLQR (220 aa). Positions 560-632 are c; the sequence is MLKAAGQNAP…TNALLLSRAA (73 aa).

The protein belongs to the heat shock protein 90 family. Homodimer.

The protein localises to the cytoplasm. Its function is as follows. Molecular chaperone. Has ATPase activity. This is Chaperone protein HtpG from Burkholderia ambifaria (strain ATCC BAA-244 / DSM 16087 / CCUG 44356 / LMG 19182 / AMMD) (Burkholderia cepacia (strain AMMD)).